A 249-amino-acid polypeptide reads, in one-letter code: DNA repair protein RecO (249 aa).

The protein belongs to the RecO family.

In terms of biological role, involved in DNA repair and RecF pathway recombination. The protein is DNA repair protein RecO of Lactobacillus delbrueckii subsp. bulgaricus (strain ATCC 11842 / DSM 20081 / BCRC 10696 / JCM 1002 / NBRC 13953 / NCIMB 11778 / NCTC 12712 / WDCM 00102 / Lb 14).